The sequence spans 530 residues: Chaperonin GroEL, chloroplastic (530 aa).

ATP is bound by residues Thr29–Pro32, Asp86–Thr90, Gly414, Asp480–Leu482, and Asp496.

Belongs to the chaperonin (HSP60) family. As to quaternary structure, forms a cylinder of 14 subunits composed of two heptameric rings stacked back-to-back. Interacts with the co-chaperonin GroES.

It is found in the plastid. Its subcellular location is the chloroplast. It catalyses the reaction ATP + H2O + a folded polypeptide = ADP + phosphate + an unfolded polypeptide.. Functionally, together with its co-chaperonin GroES, plays an essential role in assisting protein folding. The GroEL-GroES system forms a nano-cage that allows encapsulation of the non-native substrate proteins and provides a physical environment optimized to promote and accelerate protein folding. The chain is Chaperonin GroEL, chloroplastic from Cyanidium caldarium (Red alga).